Here is a 360-residue protein sequence, read N- to C-terminus: Putative F-box protein At3g16210 (360 aa).

The F-box domain occupies 1-48; it reads MSKFLPEELAIEILVRLSMKDLARFRCVCKTWRDLINDPGFTETYRDM.

The sequence is that of Putative F-box protein At3g16210 from Arabidopsis thaliana (Mouse-ear cress).